A 410-amino-acid polypeptide reads, in one-letter code: Translation initiation factor 2 subunit gamma (410 aa).

One can recognise a tr-type G domain in the interval 6–203 (QSEVNIGMVG…AIQDFIPTPE (198 aa)). Residues 15–22 (GHVDHGKT) are G1. The Mg(2+) site is built by D18, T22, G43, and S45. 18–23 (DHGKTS) lines the GTP pocket. The interval 43–47 (GISIR) is G2. Residues C58, C61, C73, and C76 each contribute to the Zn(2+) site. The interval 90–93 (DAPG) is G3. Residues 146–149 (NKID) and 181–183 (SAH) contribute to the GTP site. The interval 146–149 (NKID) is G4. The segment at 181–183 (SAH) is G5.

This sequence belongs to the TRAFAC class translation factor GTPase superfamily. Classic translation factor GTPase family. EIF2G subfamily. Heterotrimer composed of an alpha, a beta and a gamma chain. Mg(2+) serves as cofactor.

The enzyme catalyses GTP + H2O = GDP + phosphate + H(+). In terms of biological role, eIF-2 functions in the early steps of protein synthesis by forming a ternary complex with GTP and initiator tRNA. This Methanococcus maripaludis (strain DSM 14266 / JCM 13030 / NBRC 101832 / S2 / LL) protein is Translation initiation factor 2 subunit gamma.